Consider the following 374-residue polypeptide: DNA replication and repair protein RecF (374 aa).

34–41 is an ATP binding site; that stretch reads GNNGAGKT.

Belongs to the RecF family.

The protein localises to the cytoplasm. Functionally, the RecF protein is involved in DNA metabolism; it is required for DNA replication and normal SOS inducibility. RecF binds preferentially to single-stranded, linear DNA. It also seems to bind ATP. The protein is DNA replication and repair protein RecF of Rhizobium etli (strain CIAT 652).